Consider the following 239-residue polypeptide: tRNA (guanine-N(1)-)-methyltransferase (239 aa).

S-adenosyl-L-methionine is bound by residues G108 and 127–132 (LGDYVL).

It belongs to the RNA methyltransferase TrmD family. As to quaternary structure, homodimer.

It is found in the cytoplasm. It carries out the reaction guanosine(37) in tRNA + S-adenosyl-L-methionine = N(1)-methylguanosine(37) in tRNA + S-adenosyl-L-homocysteine + H(+). In terms of biological role, specifically methylates guanosine-37 in various tRNAs. This chain is tRNA (guanine-N(1)-)-methyltransferase, found in Streptococcus pneumoniae serotype 19F (strain G54).